We begin with the raw amino-acid sequence, 386 residues long: Heat-inducible transcription repressor HrcA (386 aa).

It belongs to the HrcA family.

In terms of biological role, negative regulator of class I heat shock genes (grpE-dnaK-dnaJ and groELS operons). Prevents heat-shock induction of these operons. This is Heat-inducible transcription repressor HrcA from Chlamydia felis (strain Fe/C-56) (Chlamydophila felis).